Consider the following 981-residue polypeptide: Ubiquitin carboxyl-terminal hydrolase 37 (981 aa).

Positions 32–34 (KEN) match the KEN box 1 motif. Short sequence motifs (D-box) lie at residues 71–79 (RLMLTLQDN) and 96–105 (RLFLDAVHQN). The interval 111-308 (MKPSQGSGSF…SAKRSLGFLP (198 aa)) is disordered. Phosphoserine is present on serine 114. A compositionally biased stretch (polar residues) spans 135 to 148 (RQLSYSDNQASSKR). Residues 149 to 159 (GSLETKDDIPF) are compositionally biased toward basic and acidic residues. Positions 160–168 (RKVLGNPGR) match the D-box 3 motif. At serine 170 the chain carries Phosphoserine. Polar residues predominate over residues 172 to 195 (KTATGSGITVTRTIPSLTSASTPL). Serine 212 is modified (phosphoserine). The KEN box 2 motif lies at 223-225 (KEN). Over residues 245–259 (SREKQLSLKQSEENR) the composition is skewed to basic and acidic residues. The span at 266 to 300 (LQSSSFYGSRTGSKDYSSGSTNLDRTNVSGQTPSA) shows a compositional bias: polar residues. The 611-residue stretch at 343–953 (QGFSNLGNTC…SGYIFFYMHK (611 aa)) folds into the USP domain. The Nucleophile role is filled by cysteine 352. At serine 630 the chain carries Phosphoserine; by CDK2. 2 positions are modified to phosphoserine: serine 652 and serine 654. Disordered stretches follow at residues 673-704 (GCEQ…GFDG) and 719-831 (KREA…EQKE). 2 stretches are compositionally biased toward basic and acidic residues: residues 683-697 (KDSK…KSEL) and 719-734 (KREA…DDKP). The UIM 1 domain occupies 706-725 (SEEELLAAVLEMSKREASPT). The residue at position 772 (serine 772) is a Phosphoserine. Residues 776–788 (ITKDCDENKENKT) show a composition bias toward basic and acidic residues. Residues 784-786 (KEN) carry the KEN box 3 motif. 2 UIM domains span residues 808–827 (REEQ…QEAW) and 830–849 (KEDD…FNNS). Residues 813–824 (LQQALAQSLQEQ) are compositionally biased toward low complexity. Histidine 908 (proton acceptor) is an active-site residue.

This sequence belongs to the peptidase C19 family. As to quaternary structure, interacts with FZR1/CDH1. Interacts with CDT1. Post-translationally, polyubiquitinated via 'Lys-11'-linked ubiquitin by the APC(CDH1) complex during late mitosis, leading to its degradation. Able to mediate auto-deubiquitination. In terms of processing, phosphorylated at Ser-630 by CDK2 during G1/S phase but not during mitosis; phosphorylation at Ser-630 is required for deubiquitinase activity. Also polyubiquitinated during early G1 phase, without leading to degradation. Phosphorylated at Ser-114 by ATM following DNA damage, which in turn increases its deubiquitination activity towards BLM.

It localises to the nucleus. It is found in the chromosome. The enzyme catalyses Thiol-dependent hydrolysis of ester, thioester, amide, peptide and isopeptide bonds formed by the C-terminal Gly of ubiquitin (a 76-residue protein attached to proteins as an intracellular targeting signal).. In terms of biological role, deubiquitinase that plays a role in different processes including cell cycle regulation, DNA replication or DNA damage response. Antagonizes the anaphase-promoting complex (APC/C) during G1/S transition by mediating deubiquitination of cyclin-A (CCNA1 and CCNA2), thereby promoting S phase entry. Specifically mediates deubiquitination of 'Lys-11'-linked polyubiquitin chains, a specific ubiquitin-linkage type mediated by the APC/C complex. Phosphorylation at Ser-628 during G1/S phase maximizes the deubiquitinase activity, leading to prevent degradation of cyclin-A (CCNA1 and CCNA2). Plays an important role in the regulation of DNA replication by stabilizing the licensing factor CDT1. Also plays an essential role beyond S-phase entry to promote the efficiency and fidelity of replication by deubiquitinating checkpoint kinase 1/CHK1, promoting its stability. Sustains the DNA damage response (DDR) by deubiquitinating and stabilizing the ATP-dependent DNA helicase BLM. Mechanistically, DNA double-strand breaks (DSB) promotes ATM-mediated phosphorylation of USP37 and enhances the binding between USP37 and BLM. Promotes cell migration by deubiquitinating and stabilizing the epithelial-mesenchymal transition (EMT)-inducing transcription factor SNAI. Plays a role in the regulation of mitotic spindle assembly and mitotic progression by associating with chromatin-associated WAPL and stabilizing it through deubiquitination. The sequence is that of Ubiquitin carboxyl-terminal hydrolase 37 (USP37) from Canis lupus familiaris (Dog).